Reading from the N-terminus, the 155-residue chain is 6,7-dimethyl-8-ribityllumazine synthase (155 aa).

5-amino-6-(D-ribitylamino)uracil is bound by residues phenylalanine 23, 57–59, and 81–83; these read AFE and AVI. 86-87 provides a ligand contact to (2S)-2-hydroxy-3-oxobutyl phosphate; sequence ST. Histidine 89 acts as the Proton donor in catalysis. Position 114 (phenylalanine 114) interacts with 5-amino-6-(D-ribitylamino)uracil. Arginine 128 contributes to the (2S)-2-hydroxy-3-oxobutyl phosphate binding site.

The protein belongs to the DMRL synthase family.

It carries out the reaction (2S)-2-hydroxy-3-oxobutyl phosphate + 5-amino-6-(D-ribitylamino)uracil = 6,7-dimethyl-8-(1-D-ribityl)lumazine + phosphate + 2 H2O + H(+). It participates in cofactor biosynthesis; riboflavin biosynthesis; riboflavin from 2-hydroxy-3-oxobutyl phosphate and 5-amino-6-(D-ribitylamino)uracil: step 1/2. Functionally, catalyzes the formation of 6,7-dimethyl-8-ribityllumazine by condensation of 5-amino-6-(D-ribitylamino)uracil with 3,4-dihydroxy-2-butanone 4-phosphate. This is the penultimate step in the biosynthesis of riboflavin. The sequence is that of 6,7-dimethyl-8-ribityllumazine synthase from Desulfatibacillum aliphaticivorans.